The sequence spans 520 residues: GMP synthase [glutamine-hydrolyzing] (520 aa).

Residues 9-202 (RVLIVDFGSQ…LFNIAGLKGD (194 aa)) form the Glutamine amidotransferase type-1 domain. C86 acts as the Nucleophile in catalysis. Active-site residues include H176 and E178. The GMPS ATP-PPase domain maps to 203–395 (WTMAAFRQEM…LGLAPAFVGR (193 aa)). An ATP-binding site is contributed by 230–236 (SGGVDSS).

Homodimer.

It carries out the reaction XMP + L-glutamine + ATP + H2O = GMP + L-glutamate + AMP + diphosphate + 2 H(+). It functions in the pathway purine metabolism; GMP biosynthesis; GMP from XMP (L-Gln route): step 1/1. Catalyzes the synthesis of GMP from XMP. This is GMP synthase [glutamine-hydrolyzing] from Caulobacter vibrioides (strain ATCC 19089 / CIP 103742 / CB 15) (Caulobacter crescentus).